The chain runs to 135 residues: L-alanine exporter AlaE (135 aa).

3 helical membrane passes run 9–29, 75–95, and 96–116; these read VATVIFFTAVATFSELLIAGM, DILAFLSFQAPVYGATLLIAG, and ASFAEAGTAIGSAIILMILLA.

It belongs to the AlaE exporter family.

The protein localises to the cell inner membrane. Functionally, exports L-alanine. The polypeptide is L-alanine exporter AlaE (Cereibacter sphaeroides (strain ATCC 17023 / DSM 158 / JCM 6121 / CCUG 31486 / LMG 2827 / NBRC 12203 / NCIMB 8253 / ATH 2.4.1.) (Rhodobacter sphaeroides)).